The sequence spans 200 residues: Glycerol-3-phosphate acyltransferase (200 aa).

6 helical membrane-spanning segments follow: residues 9-29 (IIIG…AYFW), 54-74 (VPGM…VLLA), 81-101 (DIAV…PLWL), 112-132 (GAGA…LVWL), 140-160 (YVSL…ALLN), and 165-185 (YLIF…SNIG).

It belongs to the PlsY family. As to quaternary structure, probably interacts with PlsX.

Its subcellular location is the cell membrane. The enzyme catalyses an acyl phosphate + sn-glycerol 3-phosphate = a 1-acyl-sn-glycero-3-phosphate + phosphate. It functions in the pathway lipid metabolism; phospholipid metabolism. Functionally, catalyzes the transfer of an acyl group from acyl-phosphate (acyl-PO(4)) to glycerol-3-phosphate (G3P) to form lysophosphatidic acid (LPA). This enzyme utilizes acyl-phosphate as fatty acyl donor, but not acyl-CoA or acyl-ACP. In Desulforamulus reducens (strain ATCC BAA-1160 / DSM 100696 / MI-1) (Desulfotomaculum reducens), this protein is Glycerol-3-phosphate acyltransferase.